We begin with the raw amino-acid sequence, 380 residues long: mRNA cap guanine-N(7) methyltransferase (380 aa).

The mRNA cap 0 methyltransferase domain occupies 24–333; the sequence is SRIFFMRNMN…MYLVFGFRKK (310 aa). 33 to 34 is an mRNA binding site; the sequence is NN. Lys37, Ala62, Asp84, Asp117, Gln139, and Tyr144 together coordinate S-adenosyl-L-methionine. The interval 336–380 is disordered; sequence EAEKTEEEPATTKPVAESESEQKEVTESEEKEDQEDCEHQEAQTN.

Belongs to the class I-like SAM-binding methyltransferase superfamily. mRNA cap 0 methyltransferase family.

It is found in the nucleus. It catalyses the reaction a 5'-end (5'-triphosphoguanosine)-ribonucleoside in mRNA + S-adenosyl-L-methionine = a 5'-end (N(7)-methyl 5'-triphosphoguanosine)-ribonucleoside in mRNA + S-adenosyl-L-homocysteine. Its function is as follows. mRNA-capping methyltransferase that methylates the N7 position of the added guanosine to the 5'-cap structure of mRNAs. Binds RNA containing 5'-terminal GpppC. The sequence is that of mRNA cap guanine-N(7) methyltransferase (tag-72) from Caenorhabditis elegans.